A 490-amino-acid chain; its full sequence is (21S)-21-acetyl-1-hydroxy-apo-melianone synthase CYP88A164 (490 aa).

The helical transmembrane segment at 4–24 threads the bilayer; that stretch reads DLLWLILAIVVGTYVVLFGFL. Residue Cys-438 participates in heme binding.

This sequence belongs to the cytochrome P450 family. Requires heme as cofactor. Mainly expressed in petioles and, to a lower extent, in roots.

The protein localises to the membrane. The enzyme catalyses (21S)-21-acetoxyl-apo-melianone + reduced [NADPH--hemoprotein reductase] + O2 = (21S)-21-acetyl-1-hydroxy-apo-melianone + oxidized [NADPH--hemoprotein reductase] + H2O + H(+). It participates in secondary metabolite biosynthesis; terpenoid biosynthesis. Monooxygenase involved in the biosynthesis of limonoids triterpene natural products such as azadirachtin, an antifeedant widely used as bioinsecticide, and possessing many medicinal applications including anti-tumoral, anti-malarial, anti-rheumatic, antibacterial, anti-inflammatory, anti-pyretic and diuretic effects. Catalyzes the conversion of (21S)-21-acetoxyl-apo-melianone to (21S)-21-acetyl-1-hydroxy-apo-melianone. This Melia azedarach (Chinaberry tree) protein is (21S)-21-acetyl-1-hydroxy-apo-melianone synthase CYP88A164.